The sequence spans 403 residues: Arginine biosynthesis bifunctional protein ArgJ (403 aa).

The substrate site is built by Thr149, Lys175, Thr186, Glu272, Asn398, and Thr403. Thr186 (nucleophile) is an active-site residue.

Belongs to the ArgJ family. As to quaternary structure, heterotetramer of two alpha and two beta chains.

The protein resides in the cytoplasm. It carries out the reaction N(2)-acetyl-L-ornithine + L-glutamate = N-acetyl-L-glutamate + L-ornithine. It catalyses the reaction L-glutamate + acetyl-CoA = N-acetyl-L-glutamate + CoA + H(+). Its pathway is amino-acid biosynthesis; L-arginine biosynthesis; L-ornithine and N-acetyl-L-glutamate from L-glutamate and N(2)-acetyl-L-ornithine (cyclic): step 1/1. It participates in amino-acid biosynthesis; L-arginine biosynthesis; N(2)-acetyl-L-ornithine from L-glutamate: step 1/4. Its function is as follows. Catalyzes two activities which are involved in the cyclic version of arginine biosynthesis: the synthesis of N-acetylglutamate from glutamate and acetyl-CoA as the acetyl donor, and of ornithine by transacetylation between N(2)-acetylornithine and glutamate. The sequence is that of Arginine biosynthesis bifunctional protein ArgJ from Caldanaerobacter subterraneus subsp. tengcongensis (strain DSM 15242 / JCM 11007 / NBRC 100824 / MB4) (Thermoanaerobacter tengcongensis).